A 368-amino-acid chain; its full sequence is DNA replication and repair protein RecF (368 aa).

30–37 (GNNAQGKT) contributes to the ATP binding site.

It belongs to the RecF family.

It localises to the cytoplasm. In terms of biological role, the RecF protein is involved in DNA metabolism; it is required for DNA replication and normal SOS inducibility. RecF binds preferentially to single-stranded, linear DNA. It also seems to bind ATP. The chain is DNA replication and repair protein RecF from Streptococcus pyogenes serotype M49 (strain NZ131).